The following is a 127-amino-acid chain: Small ribosomal subunit protein uS13 (127 aa).

The disordered stretch occupies residues 90–127 (RRHRQGLPVRGQRTRTNARTRRGRRLTVAGKKKTPAKK). A compositionally biased stretch (basic residues) spans 101–127 (QRTRTNARTRRGRRLTVAGKKKTPAKK).

It belongs to the universal ribosomal protein uS13 family. In terms of assembly, part of the 30S ribosomal subunit. Forms a loose heterodimer with protein S19. Forms two bridges to the 50S subunit in the 70S ribosome.

Located at the top of the head of the 30S subunit, it contacts several helices of the 16S rRNA. In the 70S ribosome it contacts the 23S rRNA (bridge B1a) and protein L5 of the 50S subunit (bridge B1b), connecting the 2 subunits; these bridges are implicated in subunit movement. Contacts the tRNAs in the A and P-sites. The protein is Small ribosomal subunit protein uS13 of Synechocystis sp. (strain ATCC 27184 / PCC 6803 / Kazusa).